The sequence spans 324 residues: CIMIP2 protein GA14893 (324 aa).

It belongs to the CIMIP2 family.

Its subcellular location is the cytoplasm. The protein localises to the cytoskeleton. It localises to the cilium axoneme. Its function is as follows. Probable microtubule inner protein (MIP) part of the dynein-decorated doublet microtubules (DMTs) in cilium axoneme. The protein is CIMIP2 protein GA14893 of Drosophila pseudoobscura pseudoobscura (Fruit fly).